Consider the following 333-residue polypeptide: MLFLQFLLLALLLPGGDNADASQEHVSFHVIQIFSFVNQSWARGQGSGWLDELQTHGWDSESGTIIFLHNWSKGNFSNEELSDLELLFRFYLFGLTREIQDHASQDYSKYPFEVQVKAGCELHSGKSPEGFFQVAFNGLDLLSFQNTTWVPSPGCGSLAQSVCHLLNHQYEGVTETVYNLIRSTCPRFLLGLLDAGKMYVHRQVRPEAWLSSRPSLGSGQLLLVCHASGFYPKPVWVTWMRNEQEQLGTKHGDILPNADGTWYLQVILEVASEEPAGLSCRVRHSSLGGQDIILYWGHHFSMNWIALVVIVPLVILIVLVLWFKKHCSYQDIL.

The signal sequence occupies residues 1-17 (MLFLQFLLLALLLPGGD). Residues 18 to 302 (NADASQEHVS…ILYWGHHFSM (285 aa)) are Extracellular-facing. Asn38, Asn70, Asn75, and Asn146 each carry an N-linked (GlcNAc...) asparagine glycan. Disulfide bonds link Cys120-Cys185 and Cys225-Cys280. One can recognise an Ig-like domain in the interval 206 to 296 (PEAWLSSRPS…LGGQDIILYW (91 aa)). The chain crosses the membrane as a helical span at residues 303–323 (NWIALVVIVPLVILIVLVLWF). At 324 to 333 (KKHCSYQDIL) the chain is on the cytoplasmic side. Positions 329-332 (YQDI) match the Internalization signal motif.

In terms of assembly, heterodimer with B2M (beta-2-microglobulin). In terms of tissue distribution, expressed on cortical thymocytes, on certain T-cell leukemias, and in various other tissues.

The protein resides in the cell membrane. It is found in the endosome membrane. It localises to the lysosome. Functionally, antigen-presenting protein that binds self and non-self lipid and glycolipid antigens and presents them to T-cell receptors on natural killer T-cells. The sequence is that of T-cell surface glycoprotein CD1c (CD1C) from Homo sapiens (Human).